The chain runs to 22 residues: MHNSIAYDKDGNSTGQKYYAYG.

Residues 1 to 22 form a disordered region; the sequence is MHNSIAYDKDGNSTGQKYYAYG.

This is an uncharacterized protein from Lactobacillus helveticus (Lactobacillus suntoryeus).